Reading from the N-terminus, the 164-residue chain is MGDLPGLVRLSIALRIQPNDGPVFFKVDGQRFGQNRTIKLLTGSSYKVEVKIKPTTLQVENISIGGVLVPLELKGKEPDGERVVYTGIYDTEGVAPTKSGERQPIQITMPFTDIGTFETVWQVKFYNYHKRDHCQWGSPFSVIEYECKPNETRSLMWVNKESFL.

Belongs to the CNRIP family. As to quaternary structure, interacts with the cannabinoid receptor CNR1 (via C-terminus). Does not interact with cannabinoid receptor CNR2. As to expression, highly expressed in brain. Also detected in heart, lung, intestine, kidney, testis, spleen, liver and muscle (at protein level).

Its function is as follows. Suppresses cannabinoid receptor CNR1-mediated tonic inhibition of voltage-gated calcium channels. The protein is CB1 cannabinoid receptor-interacting protein 1 (Cnrip1) of Mus musculus (Mouse).